The chain runs to 853 residues: Auxin response factor 23 (853 aa).

The interval 118-141 (PESKQQEDNGSTEEEVPSAPAAGH) is disordered. The TF-B3 DNA-binding region spans 149 to 251 (FCKTLTASDT…ELRVGVRRAM (103 aa)). Disordered regions lie at residues 422 to 484 (ESEP…RMQM) and 647 to 723 (PAKS…QGVS). The segment covering 425–455 (PNGTQRTFQTQENATPKSGFGNSSELESAQK) has biased composition (polar residues). The segment covering 672 to 686 (EWRRPDVTEVEKCSD) has biased composition (basic and acidic residues). Residues 706–723 (PSSQQASRNMSCKSQGVS) are compositionally biased toward polar residues. In terms of domain architecture, PB1 spans 725–809 (RSCKKVHKQG…HKIFIYTREE (85 aa)). The interval 815–853 (PGTLNSRSEDSHANSMERGSVGREMRGCLSTSSLNSENC) is disordered. The span at 843–853 (LSTSSLNSENC) shows a compositional bias: polar residues.

It belongs to the ARF family. In terms of assembly, homodimers and heterodimers. Interacts with CRL1. As to expression, expressed in roots, culms, leaves and young panicles.

Its subcellular location is the nucleus. Its function is as follows. Auxin response factors (ARFs) are transcriptional factors that bind specifically to the DNA sequence 5'-TGTCTC-3' found in the auxin-responsive promoter elements (AuxREs). This Oryza sativa subsp. japonica (Rice) protein is Auxin response factor 23 (ARF23).